The sequence spans 362 residues: Peptide chain release factor 1 (362 aa).

Gln-240 is subject to N5-methylglutamine.

The protein belongs to the prokaryotic/mitochondrial release factor family. Post-translationally, methylated by PrmC. Methylation increases the termination efficiency of RF1.

The protein localises to the cytoplasm. In terms of biological role, peptide chain release factor 1 directs the termination of translation in response to the peptide chain termination codons UAG and UAA. This chain is Peptide chain release factor 1, found in Bifidobacterium longum subsp. infantis (strain ATCC 15697 / DSM 20088 / JCM 1222 / NCTC 11817 / S12).